The sequence spans 119 residues: Defensin-like protein 260 (119 aa).

The first 24 residues, 1–24 (MKIASLKLLLLVSLLFAVTQNGIS), serve as a signal peptide directing secretion. 4 disulfides stabilise this stretch: Cys-44/Cys-99, Cys-63/Cys-79, Cys-69/Cys-83, and Cys-73/Cys-85.

It belongs to the DEFL family.

The protein localises to the secreted. The polypeptide is Defensin-like protein 260 (Arabidopsis thaliana (Mouse-ear cress)).